Here is a 33-residue protein sequence, read N- to C-terminus: Brevinin-2Eb (33 aa).

A disulfide bridge links Cys-27 with Cys-33.

The protein belongs to the frog skin active peptide (FSAP) family. Brevinin subfamily. In terms of tissue distribution, expressed by the skin glands.

It is found in the secreted. Shows antibacterial activity against representative Gram-negative and Gram-positive bacterial species, and hemolytic activity. The chain is Brevinin-2Eb from Pelophylax lessonae (Pool frog).